A 214-amino-acid chain; its full sequence is Octanoyltransferase (214 aa).

Positions Gly34 to Asn214 constitute a BPL/LPL catalytic domain. Substrate is bound by residues Arg73 to His80, Ala145 to Gly147, and Gly158 to Ser160. Cys176 serves as the catalytic Acyl-thioester intermediate.

It belongs to the LipB family.

Its subcellular location is the cytoplasm. The enzyme catalyses octanoyl-[ACP] + L-lysyl-[protein] = N(6)-octanoyl-L-lysyl-[protein] + holo-[ACP] + H(+). The protein operates within protein modification; protein lipoylation via endogenous pathway; protein N(6)-(lipoyl)lysine from octanoyl-[acyl-carrier-protein]: step 1/2. Its function is as follows. Catalyzes the transfer of endogenously produced octanoic acid from octanoyl-acyl-carrier-protein onto the lipoyl domains of lipoate-dependent enzymes. Lipoyl-ACP can also act as a substrate although octanoyl-ACP is likely to be the physiological substrate. This chain is Octanoyltransferase, found in Ehrlichia canis (strain Jake).